The sequence spans 121 residues: Ribonuclease P protein component (121 aa).

It belongs to the RnpA family. In terms of assembly, consists of a catalytic RNA component (M1 or rnpB) and a protein subunit.

It catalyses the reaction Endonucleolytic cleavage of RNA, removing 5'-extranucleotides from tRNA precursor.. RNaseP catalyzes the removal of the 5'-leader sequence from pre-tRNA to produce the mature 5'-terminus. It can also cleave other RNA substrates such as 4.5S RNA. The protein component plays an auxiliary but essential role in vivo by binding to the 5'-leader sequence and broadening the substrate specificity of the ribozyme. This chain is Ribonuclease P protein component, found in Desulfosudis oleivorans (strain DSM 6200 / JCM 39069 / Hxd3) (Desulfococcus oleovorans).